We begin with the raw amino-acid sequence, 360 residues long: GTPase Obg (360 aa).

Residues 1 to 156 (MFVDSVEIII…KCVRLELKLI (156 aa)) enclose the Obg domain. One can recognise an OBG-type G domain in the interval 157–360 (ADIGLVGFPN…LKFVLLKALQ (204 aa)). Residues 163-170 (GFPNAGKS), 188-192 (FTTLV), 210-213 (DIPG), 279-282 (NKCD), and 341-343 (SAV) each bind GTP. The Mg(2+) site is built by Ser170 and Thr190.

Belongs to the TRAFAC class OBG-HflX-like GTPase superfamily. OBG GTPase family. In terms of assembly, monomer. Requires Mg(2+) as cofactor.

It localises to the cytoplasm. In terms of biological role, an essential GTPase which binds GTP, GDP and possibly (p)ppGpp with moderate affinity, with high nucleotide exchange rates and a fairly low GTP hydrolysis rate. Plays a role in control of the cell cycle, stress response, ribosome biogenesis and in those bacteria that undergo differentiation, in morphogenesis control. This chain is GTPase Obg, found in Helicobacter pylori (strain J99 / ATCC 700824) (Campylobacter pylori J99).